The chain runs to 374 residues: Histidinol-phosphate aminotransferase (374 aa).

The residue at position 215 (Lys-215) is an N6-(pyridoxal phosphate)lysine.

The protein belongs to the class-II pyridoxal-phosphate-dependent aminotransferase family. Histidinol-phosphate aminotransferase subfamily. Homodimer. It depends on pyridoxal 5'-phosphate as a cofactor.

It catalyses the reaction L-histidinol phosphate + 2-oxoglutarate = 3-(imidazol-4-yl)-2-oxopropyl phosphate + L-glutamate. It participates in amino-acid biosynthesis; L-histidine biosynthesis; L-histidine from 5-phospho-alpha-D-ribose 1-diphosphate: step 7/9. This Yersinia enterocolitica serotype O:8 / biotype 1B (strain NCTC 13174 / 8081) protein is Histidinol-phosphate aminotransferase.